The chain runs to 172 residues: 3-hydroxydecanoyl-[acyl-carrier-protein] dehydratase (172 aa).

Histidine 71 is an active-site residue.

Belongs to the thioester dehydratase family. FabA subfamily. Homodimer.

It is found in the cytoplasm. It catalyses the reaction a (3R)-hydroxyacyl-[ACP] = a (2E)-enoyl-[ACP] + H2O. The catalysed reaction is (3R)-hydroxydecanoyl-[ACP] = (2E)-decenoyl-[ACP] + H2O. It carries out the reaction (2E)-decenoyl-[ACP] = (3Z)-decenoyl-[ACP]. It functions in the pathway lipid metabolism; fatty acid biosynthesis. Necessary for the introduction of cis unsaturation into fatty acids. Catalyzes the dehydration of (3R)-3-hydroxydecanoyl-ACP to E-(2)-decenoyl-ACP and then its isomerization to Z-(3)-decenoyl-ACP. Can catalyze the dehydratase reaction for beta-hydroxyacyl-ACPs with saturated chain lengths up to 16:0, being most active on intermediate chain length. This Klebsiella pneumoniae subsp. pneumoniae (strain ATCC 700721 / MGH 78578) protein is 3-hydroxydecanoyl-[acyl-carrier-protein] dehydratase.